We begin with the raw amino-acid sequence, 490 residues long: Aspartyl/glutamyl-tRNA(Asn/Gln) amidotransferase subunit B (490 aa).

Belongs to the GatB/GatE family. GatB subfamily. In terms of assembly, heterotrimer of A, B and C subunits.

The catalysed reaction is L-glutamyl-tRNA(Gln) + L-glutamine + ATP + H2O = L-glutaminyl-tRNA(Gln) + L-glutamate + ADP + phosphate + H(+). The enzyme catalyses L-aspartyl-tRNA(Asn) + L-glutamine + ATP + H2O = L-asparaginyl-tRNA(Asn) + L-glutamate + ADP + phosphate + 2 H(+). Its function is as follows. Allows the formation of correctly charged Asn-tRNA(Asn) or Gln-tRNA(Gln) through the transamidation of misacylated Asp-tRNA(Asn) or Glu-tRNA(Gln) in organisms which lack either or both of asparaginyl-tRNA or glutaminyl-tRNA synthetases. The reaction takes place in the presence of glutamine and ATP through an activated phospho-Asp-tRNA(Asn) or phospho-Glu-tRNA(Gln). The protein is Aspartyl/glutamyl-tRNA(Asn/Gln) amidotransferase subunit B of Burkholderia pseudomallei (strain 1106a).